The primary structure comprises 517 residues: MSSRSPDELLRIEGIRKTFPGVVALDSVDFDLRRGEVHVLLGENGAGKSTLIKMLSGAYTPDAGRILAGGEEVRIHGAQDSERLGIATIYQEFNLVPDLTVAENIFLGRQPRRLGMIDRKRMDADAEVLLKRVGVNVSPRARVRELGIARLQMVEIAKALSLDARVLIMDEPTAVLTSEEVDKLFAIVRRLREDGVGIVFITHHLEEIAALGDRVTVIRDGRSVGQVPASTPEDELVRLMVGRSIEQQYPRERTDAGEALLKVEGLTRDGVFHDVGFEVRAGEVVGIAGLVGAGRTEVVRAVFGADPYDAGTVHVAGAPLRRHDVNAAMAAGIGLVPEDRKGQGLVLDASVEENLGLVTLRSTARAGLVDLKGQHTAAERIAGQLGVRMAGLGQHVRTLSGGNQQKVVIGKWLLANTKVLILDEPTRGIDVGAKVEIYQLINELTAAGAAVLMISSDLPEVLGMSDRVVVMAQGRVAGELTAEQATQDAVMALAVSTHTGNSPHSGGTDGTEASRGH.

2 consecutive ABC transporter domains span residues 10–245 (LRIE…GRSI) and 255–498 (DAGE…VSTH). 42–49 (GENGAGKS) contacts ATP. The disordered stretch occupies residues 497–517 (THTGNSPHSGGTDGTEASRGH).

Belongs to the ABC transporter superfamily. Ribose importer (TC 3.A.1.2.1) family. As to quaternary structure, the complex is composed of an ATP-binding protein (RbsA), two transmembrane proteins (RbsC) and a solute-binding protein (RbsB).

The protein resides in the cell membrane. It carries out the reaction D-ribose(out) + ATP + H2O = D-ribose(in) + ADP + phosphate + H(+). Functionally, part of the ABC transporter complex RbsABC involved in ribose import. Responsible for energy coupling to the transport system. The chain is Ribose import ATP-binding protein RbsA 2 from Streptomyces coelicolor (strain ATCC BAA-471 / A3(2) / M145).